We begin with the raw amino-acid sequence, 50 residues long: U2-ctenitoxin-Pk1a (50 aa).

Cystine bridges form between Cys1–Cys15, Cys8–Cys21, Cys12–Cys47, Cys14–Cys31, and Cys23–Cys29.

Expressed by the venom gland.

Its subcellular location is the secreted. Insecticidal neurotoxin that reversibly inhibits the N-methyl-D-aspartate (NMDA)-subtype of ionotropic glutamate receptor (GRIN) and inhibits inactivation of insect sodium channels (Nav). In vivo, is highly toxic to insects. The polypeptide is U2-ctenitoxin-Pk1a (Phoneutria keyserlingi (Brazilian wandering spider)).